A 305-amino-acid polypeptide reads, in one-letter code: N-acetylmuramic acid 6-phosphate etherase (305 aa).

An SIS domain is found at 61-224; sequence ISDALAKGGR…STGAMVKLGK (164 aa). Residue E89 is the Proton donor of the active site. E120 is a catalytic residue.

Belongs to the GCKR-like family. MurNAc-6-P etherase subfamily. As to quaternary structure, homodimer.

It catalyses the reaction N-acetyl-D-muramate 6-phosphate + H2O = N-acetyl-D-glucosamine 6-phosphate + (R)-lactate. It functions in the pathway amino-sugar metabolism; N-acetylmuramate degradation. In terms of biological role, specifically catalyzes the cleavage of the D-lactyl ether substituent of MurNAc 6-phosphate, producing GlcNAc 6-phosphate and D-lactate. The sequence is that of N-acetylmuramic acid 6-phosphate etherase from Synechocystis sp. (strain ATCC 27184 / PCC 6803 / Kazusa).